The chain runs to 193 residues: Segregation and condensation protein B (193 aa).

This sequence belongs to the ScpB family. As to quaternary structure, homodimer. Homodimerization may be required to stabilize the binding of ScpA to the Smc head domains. Component of a cohesin-like complex composed of ScpA, ScpB and the Smc homodimer, in which ScpA and ScpB bind to the head domain of Smc. The presence of the three proteins is required for the association of the complex with DNA.

It is found in the cytoplasm. Its function is as follows. Participates in chromosomal partition during cell division. May act via the formation of a condensin-like complex containing Smc and ScpA that pull DNA away from mid-cell into both cell halves. In Clostridium botulinum (strain Kyoto / Type A2), this protein is Segregation and condensation protein B.